Consider the following 427-residue polypeptide: Serine hydroxymethyltransferase (427 aa).

(6S)-5,6,7,8-tetrahydrofolate contacts are provided by residues leucine 122 and 126-128 (GHL). Lysine 231 bears the N6-(pyridoxal phosphate)lysine mark. 355 to 357 (SPF) is a binding site for (6S)-5,6,7,8-tetrahydrofolate.

It belongs to the SHMT family. Homodimer. Pyridoxal 5'-phosphate serves as cofactor.

The protein resides in the cytoplasm. The catalysed reaction is (6R)-5,10-methylene-5,6,7,8-tetrahydrofolate + glycine + H2O = (6S)-5,6,7,8-tetrahydrofolate + L-serine. Its pathway is one-carbon metabolism; tetrahydrofolate interconversion. It functions in the pathway amino-acid biosynthesis; glycine biosynthesis; glycine from L-serine: step 1/1. Its function is as follows. Catalyzes the reversible interconversion of serine and glycine with tetrahydrofolate (THF) serving as the one-carbon carrier. This reaction serves as the major source of one-carbon groups required for the biosynthesis of purines, thymidylate, methionine, and other important biomolecules. Also exhibits THF-independent aldolase activity toward beta-hydroxyamino acids, producing glycine and aldehydes, via a retro-aldol mechanism. The sequence is that of Serine hydroxymethyltransferase from Nostoc punctiforme (strain ATCC 29133 / PCC 73102).